The chain runs to 213 residues: Putative nascent polypeptide-associated complex subunit alpha-like protein (213 aa).

Residues 1–46 are disordered; that stretch reads MPGEATETVPAIEQQLLQPQAETGSGTESDSDESVPELEEQDSTQV. The segment covering 15–28 has biased composition (polar residues); it reads QLLQPQAETGSGTE. Residues 29–42 show a composition bias toward acidic residues; that stretch reads SDSDESVPELEEQD. Phosphoserine occurs at positions 43 and 131. The NAC-A/B domain occupies 69–134; sequence RRSEKKARKA…AKIEDLSQEA (66 aa). Lysine 141 is subject to N6-acetyllysine; alternate. A Glycyl lysine isopeptide (Lys-Gly) (interchain with G-Cter in SUMO2); alternate cross-link involves residue lysine 141. Position 160 is a phosphothreonine (threonine 160). Residues serine 165, serine 185, and serine 201 each carry the phosphoserine modification. One can recognise a UBA domain in the interval 175–211; the sequence is VEIKDIELVLSQANVWGAKAVRALKNSNDIVNAIMEL. Residue threonine 212 is modified to Phosphothreonine.

Belongs to the NAC-alpha family.

This Homo sapiens (Human) protein is Putative nascent polypeptide-associated complex subunit alpha-like protein.